The following is a 447-amino-acid chain: N-succinylarginine dihydrolase (447 aa).

Residues 19–28 (AGLSFGNEAS), asparagine 110, and 137–138 (HR) contribute to the substrate site. Glutamate 174 is an active-site residue. Position 214 (arginine 214) interacts with substrate. Histidine 250 is an active-site residue. Substrate is bound by residues aspartate 252 and asparagine 365. Cysteine 371 serves as the catalytic Nucleophile.

This sequence belongs to the succinylarginine dihydrolase family. Homodimer.

It catalyses the reaction N(2)-succinyl-L-arginine + 2 H2O + 2 H(+) = N(2)-succinyl-L-ornithine + 2 NH4(+) + CO2. It functions in the pathway amino-acid degradation; L-arginine degradation via AST pathway; L-glutamate and succinate from L-arginine: step 2/5. Catalyzes the hydrolysis of N(2)-succinylarginine into N(2)-succinylornithine, ammonia and CO(2). The sequence is that of N-succinylarginine dihydrolase from Acinetobacter baumannii (strain SDF).